The chain runs to 168 residues: Disulfide bond formation protein B (168 aa).

Residues 1–6 are Cytoplasmic-facing; it reads MTSRWI. The chain crosses the membrane as a helical span at residues 7 to 23; sequence FGLVFLVCAGLLAVAFY. Topologically, residues 24 to 41 are periplasmic; it reads MEHVMGLEPCPLCWLQRF. The cysteines at positions 33 and 36 are disulfide-linked. The helical transmembrane segment at 42–58 threads the bilayer; that stretch reads GFMGAGLVSLLAFLHGP. Residues 59 to 65 lie on the Cytoplasmic side of the membrane; it reads RGFGNRV. Residues 66–82 traverse the membrane as a helical segment; sequence YGLLLIVAAGAGLAVAG. Residues 83–139 are Periplasmic-facing; the sequence is RQLWLQSLPADQVPACGPSVDYMLEVLPWFEVLQTALKGTGDCAEVVWRFLGLSIPG. The cysteines at positions 98 and 125 are disulfide-linked. The helical transmembrane segment at 140–158 threads the bilayer; that stretch reads WTAVFFSLLIVLGLFVMLR. Topologically, residues 159–168 are cytoplasmic; sequence RYSPRDWLQS.

Belongs to the DsbB family.

It localises to the cell inner membrane. In terms of biological role, required for disulfide bond formation in some periplasmic proteins. Acts by oxidizing the DsbA protein. This is Disulfide bond formation protein B from Marinobacter nauticus (strain ATCC 700491 / DSM 11845 / VT8) (Marinobacter aquaeolei).